The primary structure comprises 350 residues: Protein FAM118B (350 aa).

Residue alanine 2 is modified to N-acetylalanine. Serine 9 carries the post-translational modification Phosphoserine.

The protein belongs to the FAM118 family.

It localises to the nucleus. It is found in the cajal body. Its function is as follows. May play a role in Cajal bodies formation. The chain is Protein FAM118B (FAM118B) from Macaca fascicularis (Crab-eating macaque).